The following is a 238-amino-acid chain: tRNA1(Val) (adenine(37)-N6)-methyltransferase (238 aa).

This sequence belongs to the methyltransferase superfamily. tRNA (adenine-N(6)-)-methyltransferase family.

It is found in the cytoplasm. It catalyses the reaction adenosine(37) in tRNA1(Val) + S-adenosyl-L-methionine = N(6)-methyladenosine(37) in tRNA1(Val) + S-adenosyl-L-homocysteine + H(+). Specifically methylates the adenine in position 37 of tRNA(1)(Val) (anticodon cmo5UAC). This is tRNA1(Val) (adenine(37)-N6)-methyltransferase from Shewanella baltica (strain OS223).